A 494-amino-acid chain; its full sequence is NADH-quinone oxidoreductase subunit N (494 aa).

The next 14 membrane-spanning stretches (helical) occupy residues 13–33, 43–63, 82–102, 117–137, 138–158, 169–189, 209–229, 243–263, 277–297, 311–331, 332–352, 380–400, 412–432, and 461–481; these read LIAL…MLAI, FVLT…AMGV, MALV…YLGG, LLIL…HLVG, LFIG…YAFF, YMVL…LLYA, LLVE…LSLV, PAPV…AVLL, LNEL…LLAL, IAHF…AVEA, IGVY…VITL, AVLT…GFIG, QLWW…FYYL, and IMLL…QPLL.

Belongs to the complex I subunit 2 family. In terms of assembly, NDH-1 is composed of 13 different subunits. Subunits NuoA, H, J, K, L, M, N constitute the membrane sector of the complex.

It localises to the cell inner membrane. The enzyme catalyses a quinone + NADH + 5 H(+)(in) = a quinol + NAD(+) + 4 H(+)(out). Functionally, NDH-1 shuttles electrons from NADH, via FMN and iron-sulfur (Fe-S) centers, to quinones in the respiratory chain. The immediate electron acceptor for the enzyme in this species is believed to be ubiquinone. Couples the redox reaction to proton translocation (for every two electrons transferred, four hydrogen ions are translocated across the cytoplasmic membrane), and thus conserves the redox energy in a proton gradient. In Ectopseudomonas mendocina (strain ymp) (Pseudomonas mendocina), this protein is NADH-quinone oxidoreductase subunit N.